Consider the following 178-residue polypeptide: Disulfide bond formation protein B (178 aa).

The Cytoplasmic portion of the chain corresponds to 1 to 14 (MLSFFKTLSTKRSA). The chain crosses the membrane as a helical span at residues 15–31 (WFLLFSSALLLEAIALY). The Periplasmic portion of the chain corresponds to 32–49 (FQHGMGLAPCVMCIYERV). An intrachain disulfide couples Cys-41 to Cys-44. The helical transmembrane segment at 50 to 65 (AILGIAFSGLLGLLYP) threads the bilayer. Residues 66 to 72 (SSMLLRL) are Cytoplasmic-facing. A helical transmembrane segment spans residues 73 to 90 (VALLIGLSSAIKGLMISI). At 91-145 (THLDLQLYPAPWKQCSAVAEFPETLPLDQWFPALFLPSGSCSEVTWQFLGFSMVQ) the chain is on the periplasmic side. A disulfide bond links Cys-105 and Cys-131. Residues 146-164 (WIVVIFALYTLLLALIFIS) form a helical membrane-spanning segment. The Cytoplasmic portion of the chain corresponds to 165–177 (QVKRLKPKQRRLF).

Belongs to the DsbB family.

It is found in the cell inner membrane. In terms of biological role, required for disulfide bond formation in some periplasmic proteins. Acts by oxidizing the DsbA protein. This Pasteurella multocida (strain Pm70) protein is Disulfide bond formation protein B.